A 600-amino-acid polypeptide reads, in one-letter code: Elongation factor 4 (600 aa).

Residues 6 to 188 (QFIRNFSIIA…QITKQIPSPK (183 aa)) enclose the tr-type G domain. Residues 18 to 23 (DHGKST) and 135 to 138 (NKID) each bind GTP.

The protein belongs to the TRAFAC class translation factor GTPase superfamily. Classic translation factor GTPase family. LepA subfamily.

It is found in the cell inner membrane. The catalysed reaction is GTP + H2O = GDP + phosphate + H(+). In terms of biological role, required for accurate and efficient protein synthesis under certain stress conditions. May act as a fidelity factor of the translation reaction, by catalyzing a one-codon backward translocation of tRNAs on improperly translocated ribosomes. Back-translocation proceeds from a post-translocation (POST) complex to a pre-translocation (PRE) complex, thus giving elongation factor G a second chance to translocate the tRNAs correctly. Binds to ribosomes in a GTP-dependent manner. This is Elongation factor 4 from Leptospira interrogans serogroup Icterohaemorrhagiae serovar copenhageni (strain Fiocruz L1-130).